Reading from the N-terminus, the 552-residue chain is Cilia- and flagella- associated protein 210 (552 aa).

Coiled-coil stretches lie at residues 53-143, 186-307, 348-409, and 460-488; these read DEWK…NAKQ, EEQL…KKRL, IARD…VMKA, and TEALVAEKEKEFQDYAREVIELESETTNK. Residues 216–238 form a disordered region; that stretch reads KDHLKQIKEHEEEEERRKKYEEK.

As to quaternary structure, microtubule inner protein component of sperm flagellar doublet microtubules. As to expression, expressed in airway epithelial cells.

Its subcellular location is the cytoplasm. The protein localises to the cytoskeleton. It localises to the cilium axoneme. The protein resides in the flagellum axoneme. Functionally, microtubule inner protein (MIP) part of the dynein-decorated doublet microtubules (DMTs) in cilia axoneme, which is required for motile cilia beating. This Homo sapiens (Human) protein is Cilia- and flagella- associated protein 210.